The sequence spans 122 residues: Serum amyloid A-1 protein (122 aa).

The first 18 residues, 1-18 (MKPFVAIIFCFLILGVDS), serve as a signal peptide directing secretion. The interval 19–45 (QRWFQFMKEAGQGTRDMWRAYTDMREA) is important for amyloid formation. Residues 100 to 122 (ANEWGRSGKDPNFFRPPGLPSKY) are disordered.

The protein belongs to the SAA family. Homohexamer; dimer of trimers. Can form amyloid fibrils after partial proteolysis; the native, undenatured protein does not form amyloid fibrils (in vitro). Apolipoprotein of the HDL complex. Binds to heparin. In terms of tissue distribution, detected in liver, spleen and kidney.

The protein resides in the secreted. Functionally, major acute phase protein. The sequence is that of Serum amyloid A-1 protein (SAA1) from Mesocricetus auratus (Golden hamster).